A 529-amino-acid polypeptide reads, in one-letter code: Bifunctional purine biosynthesis protein PurH (529 aa).

Residues 1–148 (MQQRRPVRRA…KNHKDVAIVV (148 aa)) form the MGS-like domain. An N6-acetyllysine modification is found at Lys287.

Belongs to the PurH family.

The catalysed reaction is (6R)-10-formyltetrahydrofolate + 5-amino-1-(5-phospho-beta-D-ribosyl)imidazole-4-carboxamide = 5-formamido-1-(5-phospho-D-ribosyl)imidazole-4-carboxamide + (6S)-5,6,7,8-tetrahydrofolate. It catalyses the reaction IMP + H2O = 5-formamido-1-(5-phospho-D-ribosyl)imidazole-4-carboxamide. It participates in purine metabolism; IMP biosynthesis via de novo pathway; 5-formamido-1-(5-phospho-D-ribosyl)imidazole-4-carboxamide from 5-amino-1-(5-phospho-D-ribosyl)imidazole-4-carboxamide (10-formyl THF route): step 1/1. The protein operates within purine metabolism; IMP biosynthesis via de novo pathway; IMP from 5-formamido-1-(5-phospho-D-ribosyl)imidazole-4-carboxamide: step 1/1. The polypeptide is Bifunctional purine biosynthesis protein PurH (Escherichia coli O7:K1 (strain IAI39 / ExPEC)).